Reading from the N-terminus, the 30-residue chain is Agglutinin alpha-1 chain (30 aa).

The Jacalin-type lectin domain maps to 1–30; sequence GVAFDDGSYTGIREINFEYNRETAIGGXQV.

It belongs to the jacalin lectin family. Tetramer of four alpha chains associated with two or four beta chains.

N-acetyl-galactosamine and D-galactose specific lectin. Binds the Tn-antigen structure GalNAc-alpha-1-O-Ser, the T-antigen structure Gal-beta1-3-GalNAc and IgA. This is Agglutinin alpha-1 chain from Morus nigra (Black mulberry).